Consider the following 366-residue polypeptide: Chorismate synthase (366 aa).

NADP(+) is bound at residue arginine 48. FMN contacts are provided by residues arginine 125–serine 127, glycine 283, lysine 298–serine 302, and arginine 324.

This sequence belongs to the chorismate synthase family. Homotetramer. FMNH2 serves as cofactor.

The catalysed reaction is 5-O-(1-carboxyvinyl)-3-phosphoshikimate = chorismate + phosphate. It functions in the pathway metabolic intermediate biosynthesis; chorismate biosynthesis; chorismate from D-erythrose 4-phosphate and phosphoenolpyruvate: step 7/7. Catalyzes the anti-1,4-elimination of the C-3 phosphate and the C-6 proR hydrogen from 5-enolpyruvylshikimate-3-phosphate (EPSP) to yield chorismate, which is the branch point compound that serves as the starting substrate for the three terminal pathways of aromatic amino acid biosynthesis. This reaction introduces a second double bond into the aromatic ring system. The polypeptide is Chorismate synthase (Lachnospira eligens (strain ATCC 27750 / DSM 3376 / VPI C15-48 / C15-B4) (Eubacterium eligens)).